The chain runs to 278 residues: 4-deoxy-L-threo-5-hexosulose-uronate ketol-isomerase (278 aa).

Zn(2+) contacts are provided by His196, His198, Glu203, and His245.

The protein belongs to the KduI family. As to quaternary structure, homohexamer. Zn(2+) serves as cofactor.

It carries out the reaction 5-dehydro-4-deoxy-D-glucuronate = 3-deoxy-D-glycero-2,5-hexodiulosonate. It functions in the pathway glycan metabolism; pectin degradation; 2-dehydro-3-deoxy-D-gluconate from pectin: step 4/5. Functionally, catalyzes the isomerization of 5-dehydro-4-deoxy-D-glucuronate to 3-deoxy-D-glycero-2,5-hexodiulosonate. This is 4-deoxy-L-threo-5-hexosulose-uronate ketol-isomerase from Escherichia coli (strain K12 / MC4100 / BW2952).